The following is a 165-amino-acid chain: MDPVNFIKTYAPRGSIIFINYAMSLTSHLNPSIEKHVGIYYGTLLSEHLVVESTYRKGVRIVPLDRFFEGYLSAKVYMLENIQVMKIAADMSLTLLGIPYGFGHDRMYCFKLVAECYKNAGIDTSSKRILGKDIFLSQNFTDDNRWIKIYDSNNLTFWQIDYLKG.

This sequence belongs to the orthopoxvirus OPG091 family.

Its subcellular location is the virion. The protein localises to the host cytoplasm. In terms of biological role, contributes to virulence in host but not to replication in cell culture. In Cynomys gunnisoni (Gunnison's prairie dog), this protein is Protein OPG091 (OPG091).